Here is a 197-residue protein sequence, read N- to C-terminus: Beta-crystallin A2 (197 aa).

The segment at 1–11 (MSSAPAPGSAP) is N-terminal arm. Beta/gamma crystallin 'Greek key' domains are found at residues 12 to 52 (VCLT…KVEN) and 53 to 99 (GAWV…RPVL). A connecting peptide region spans residues 100–105 (CANHSD). 2 consecutive Beta/gamma crystallin 'Greek key' domains span residues 106-147 (SRVT…KVSS) and 148-196 (GAWV…RRVQ).

This sequence belongs to the beta/gamma-crystallin family. As to quaternary structure, homo/heterodimer, or complexes of higher-order. The structure of beta-crystallin oligomers seems to be stabilized through interactions between the N-terminal arms.

Its function is as follows. Crystallins are the dominant structural components of the vertebrate eye lens. This chain is Beta-crystallin A2 (Cryba2), found in Mus musculus (Mouse).